The chain runs to 92 residues: Integration host factor subunit beta (92 aa).

This sequence belongs to the bacterial histone-like protein family. In terms of assembly, heterodimer of an alpha and a beta chain.

Functionally, this protein is one of the two subunits of integration host factor, a specific DNA-binding protein that functions in genetic recombination as well as in transcriptional and translational control. The protein is Integration host factor subunit beta of Azotobacter vinelandii (strain DJ / ATCC BAA-1303).